A 460-amino-acid chain; its full sequence is Phosphoenolpyruvate carboxylase (460 aa).

Belongs to the PEPCase type 2 family. As to quaternary structure, homotetramer. Requires Mg(2+) as cofactor.

The enzyme catalyses oxaloacetate + phosphate = phosphoenolpyruvate + hydrogencarbonate. Its function is as follows. Catalyzes the irreversible beta-carboxylation of phosphoenolpyruvate (PEP) to form oxaloacetate (OAA), a four-carbon dicarboxylic acid source for the tricarboxylic acid cycle. The protein is Phosphoenolpyruvate carboxylase of Pyrobaculum arsenaticum (strain DSM 13514 / JCM 11321 / PZ6).